The following is a 191-amino-acid chain: Reticulon-like protein B15 (191 aa).

The region spanning 13 to 191 (VADLCLWKDK…SKIPRAPKVE (179 aa)) is the Reticulon domain. The next 3 membrane-spanning stretches (helical) occupy residues 23-43 (INSG…EFME), 47-67 (VPLL…WAKF), and 122-142 (VAII…YICL).

Its subcellular location is the endoplasmic reticulum membrane. The sequence is that of Reticulon-like protein B15 (RTNLB15) from Arabidopsis thaliana (Mouse-ear cress).